A 276-amino-acid chain; its full sequence is Undecaprenyl-diphosphatase (276 aa).

7 consecutive transmembrane segments (helical) span residues 48-68 (AANSFKVVIQLGSILAVAIVF), 92-112 (LSIAQIAVGLVPAAVLGFLFE), 119-139 (LFSVKTVAIGLIAGAILMLFA), 155-175 (ISYKQAIAVGLFQCLSLWPGF), 196-216 (ADFTFIMAMPIMMGASFLSLV), 225-245 (DLMPFFIVGFICAFVVALFVV), and 255-275 (IKLVPFAIYRIILGVILLLIM).

This sequence belongs to the UppP family.

It localises to the cell membrane. The catalysed reaction is di-trans,octa-cis-undecaprenyl diphosphate + H2O = di-trans,octa-cis-undecaprenyl phosphate + phosphate + H(+). Functionally, catalyzes the dephosphorylation of undecaprenyl diphosphate (UPP). Confers resistance to bacitracin. The polypeptide is Undecaprenyl-diphosphatase (Bacillus subtilis (strain 168)).